We begin with the raw amino-acid sequence, 118 residues long: uncharacterized protein (118 aa).

Positions 1-12 (MADDNVSFTDQG) are enriched in polar residues. Residues 1 to 63 (MADDNVSFTD…KKGKTKKVRK (63 aa)) are disordered. Basic residues predominate over residues 39 to 63 (TKKKGKKNKKSKKKAKKGKTKKVRK). Residues 81-101 (FCAGIIVAMIMLFVIIIYGII) form a helical membrane-spanning segment.

The protein localises to the membrane. This is an uncharacterized protein from Caenorhabditis elegans.